The chain runs to 226 residues: UPF0502 protein Gbem_0194 (226 aa).

This sequence belongs to the UPF0502 family.

In Citrifermentans bemidjiense (strain ATCC BAA-1014 / DSM 16622 / JCM 12645 / Bem) (Geobacter bemidjiensis), this protein is UPF0502 protein Gbem_0194.